We begin with the raw amino-acid sequence, 242 residues long: Biosynthetic peptidoglycan transglycosylase (242 aa).

Residues Ile19–Val39 traverse the membrane as a helical segment.

The protein belongs to the glycosyltransferase 51 family.

It localises to the cell inner membrane. It carries out the reaction [GlcNAc-(1-&gt;4)-Mur2Ac(oyl-L-Ala-gamma-D-Glu-L-Lys-D-Ala-D-Ala)](n)-di-trans,octa-cis-undecaprenyl diphosphate + beta-D-GlcNAc-(1-&gt;4)-Mur2Ac(oyl-L-Ala-gamma-D-Glu-L-Lys-D-Ala-D-Ala)-di-trans,octa-cis-undecaprenyl diphosphate = [GlcNAc-(1-&gt;4)-Mur2Ac(oyl-L-Ala-gamma-D-Glu-L-Lys-D-Ala-D-Ala)](n+1)-di-trans,octa-cis-undecaprenyl diphosphate + di-trans,octa-cis-undecaprenyl diphosphate + H(+). It participates in cell wall biogenesis; peptidoglycan biosynthesis. Its function is as follows. Peptidoglycan polymerase that catalyzes glycan chain elongation from lipid-linked precursors. This Salmonella schwarzengrund (strain CVM19633) protein is Biosynthetic peptidoglycan transglycosylase.